The chain runs to 1032 residues: Phosphoenolpyruvate carboxylase 4 (1032 aa).

The active site involves His154. The segment at 377–407 (PNLQKQNEQDFSESDWEKIDNGSRSGLTSRG) is disordered. Residues 398 to 407 (GSRSGLTSRG) show a composition bias toward polar residues. Lys699 is a catalytic residue.

It belongs to the PEPCase type 1 family. In terms of assembly, homotetramer. Requires Mg(2+) as cofactor. As to expression, expressed at low levels in flowers and siliques, and detectable in roots.

The protein resides in the cytoplasm. The catalysed reaction is oxaloacetate + phosphate = phosphoenolpyruvate + hydrogencarbonate. In terms of biological role, through the carboxylation of phosphoenolpyruvate (PEP) it forms oxaloacetate, a four-carbon dicarboxylic acid source for the tricarboxylic acid cycle. This is Phosphoenolpyruvate carboxylase 4 (PPC4) from Arabidopsis thaliana (Mouse-ear cress).